A 355-amino-acid chain; its full sequence is Protein pelota homolog (355 aa).

Belongs to the eukaryotic release factor 1 family. Pelota subfamily. Monomer. The cofactor is a divalent metal cation.

The protein localises to the cytoplasm. Its function is as follows. May function in recognizing stalled ribosomes, interact with stem-loop structures in stalled mRNA molecules, and effect endonucleolytic cleavage of the mRNA. May play a role in the release non-functional ribosomes and degradation of damaged mRNAs. Has endoribonuclease activity. This Natronomonas pharaonis (strain ATCC 35678 / DSM 2160 / CIP 103997 / JCM 8858 / NBRC 14720 / NCIMB 2260 / Gabara) (Halobacterium pharaonis) protein is Protein pelota homolog.